Reading from the N-terminus, the 198-residue chain is Glycerol-3-phosphate acyltransferase (198 aa).

Helical transmembrane passes span 5 to 25, 114 to 134, and 154 to 176; these read AVIL…GYLI, VLIM…IAVL, and AFAL…LVAV.

It belongs to the PlsY family. As to quaternary structure, probably interacts with PlsX.

Its subcellular location is the cell membrane. The catalysed reaction is an acyl phosphate + sn-glycerol 3-phosphate = a 1-acyl-sn-glycero-3-phosphate + phosphate. It functions in the pathway lipid metabolism; phospholipid metabolism. Functionally, catalyzes the transfer of an acyl group from acyl-phosphate (acyl-PO(4)) to glycerol-3-phosphate (G3P) to form lysophosphatidic acid (LPA). This enzyme utilizes acyl-phosphate as fatty acyl donor, but not acyl-CoA or acyl-ACP. The sequence is that of Glycerol-3-phosphate acyltransferase from Desulforudis audaxviator (strain MP104C).